Consider the following 457-residue polypeptide: Argininosuccinate lyase (457 aa).

It belongs to the lyase 1 family. Argininosuccinate lyase subfamily.

Its subcellular location is the cytoplasm. The catalysed reaction is 2-(N(omega)-L-arginino)succinate = fumarate + L-arginine. It participates in amino-acid biosynthesis; L-arginine biosynthesis; L-arginine from L-ornithine and carbamoyl phosphate: step 3/3. The chain is Argininosuccinate lyase from Citrobacter koseri (strain ATCC BAA-895 / CDC 4225-83 / SGSC4696).